We begin with the raw amino-acid sequence, 332 residues long: MSKIGINGFGRIGRLVLRAAIDKGANVVAVNDPFIDVNYMVYLFKFDSTHGRFKGTVAAEGGFLVVNGQKITVFSERDPANINWASAGAEYIVESTGVFTTIDKASTHLKGGAKKVIISAPSADAPMFVCGVNLDAYKPDMKVVSNASCTTNCLAPLAKVINDNFEIVEGLMTTVHATTATQKTVDGPSGKLWRDGRGAAQNIIPASTGAAKAVGKVIPALNGKLTGMAFRVPTPNVSVVDLTVRLGKGASYDEIKAKVQEAANGPLKGILGYTDEEVVSTDFLSDTHSSVFDAKAGISLNDKFVKLISWYDNEFGYSNRVIDLIKYMQSKD.

NAD(+) contacts are provided by residues 11 to 12 (RI), Asp-32, and Arg-77. D-glyceraldehyde 3-phosphate-binding positions include 148 to 150 (SCT), Thr-179, 208 to 209 (TG), and Arg-231. Cys-149 acts as the Nucleophile in catalysis. Phosphotyrosine is present on Tyr-273. Thr-274 is subject to Phosphothreonine. Asn-313 is a binding site for NAD(+).

Belongs to the glyceraldehyde-3-phosphate dehydrogenase family. In terms of assembly, homotetramer.

Its subcellular location is the cytoplasm. It catalyses the reaction D-glyceraldehyde 3-phosphate + phosphate + NAD(+) = (2R)-3-phospho-glyceroyl phosphate + NADH + H(+). It participates in carbohydrate degradation; glycolysis; pyruvate from D-glyceraldehyde 3-phosphate: step 1/5. In Drosophila melanogaster (Fruit fly), this protein is Glyceraldehyde-3-phosphate dehydrogenase 2 (Gapdh2).